Consider the following 227-residue polypeptide: Ribosomal RNA small subunit methyltransferase G (227 aa).

Residues Gly-74, Leu-79, 124–125 (AE), and Arg-142 each bind S-adenosyl-L-methionine.

This sequence belongs to the methyltransferase superfamily. RNA methyltransferase RsmG family.

The protein localises to the cytoplasm. Specifically methylates the N7 position of guanine in position 518 of 16S rRNA. The sequence is that of Ribosomal RNA small subunit methyltransferase G from Mycolicibacterium vanbaalenii (strain DSM 7251 / JCM 13017 / BCRC 16820 / KCTC 9966 / NRRL B-24157 / PYR-1) (Mycobacterium vanbaalenii).